Here is a 368-residue protein sequence, read N- to C-terminus: Alanine racemase (368 aa).

Residue Lys-40 is the Proton acceptor; specific for D-alanine of the active site. N6-(pyridoxal phosphate)lysine is present on Lys-40. Residue Arg-134 participates in substrate binding. Catalysis depends on Tyr-263, which acts as the Proton acceptor; specific for L-alanine. Met-310 serves as a coordination point for substrate.

The protein belongs to the alanine racemase family. Requires pyridoxal 5'-phosphate as cofactor.

The enzyme catalyses L-alanine = D-alanine. Its pathway is amino-acid biosynthesis; D-alanine biosynthesis; D-alanine from L-alanine: step 1/1. Catalyzes the interconversion of L-alanine and D-alanine. May also act on other amino acids. The chain is Alanine racemase (alr) from Listeria innocua serovar 6a (strain ATCC BAA-680 / CLIP 11262).